The primary structure comprises 84 residues: ATP synthase subunit c (84 aa).

2 consecutive transmembrane segments (helical) span residues 9–29 and 54–74; these read IIASAILLAVAALGTALGFAI and IVAGLLDAISMIAVGIALLFI.

It belongs to the ATPase C chain family. As to quaternary structure, F-type ATPases have 2 components, F(1) - the catalytic core - and F(0) - the membrane proton channel. F(1) has five subunits: alpha(3), beta(3), gamma(1), delta(1), epsilon(1). F(0) has three main subunits: a(1), b(2) and c(10-14). The alpha and beta chains form an alternating ring which encloses part of the gamma chain. F(1) is attached to F(0) by a central stalk formed by the gamma and epsilon chains, while a peripheral stalk is formed by the delta and b chains.

Its subcellular location is the cell inner membrane. F(1)F(0) ATP synthase produces ATP from ADP in the presence of a proton or sodium gradient. F-type ATPases consist of two structural domains, F(1) containing the extramembraneous catalytic core and F(0) containing the membrane proton channel, linked together by a central stalk and a peripheral stalk. During catalysis, ATP synthesis in the catalytic domain of F(1) is coupled via a rotary mechanism of the central stalk subunits to proton translocation. In terms of biological role, key component of the F(0) channel; it plays a direct role in translocation across the membrane. A homomeric c-ring of between 10-14 subunits forms the central stalk rotor element with the F(1) delta and epsilon subunits. The protein is ATP synthase subunit c of Pasteurella multocida (strain Pm70).